The primary structure comprises 155 residues: Peptide deformylase (155 aa).

Fe cation is bound by residues Cys-88 and His-130. Glu-131 is a catalytic residue. Fe cation is bound at residue His-134.

The protein belongs to the polypeptide deformylase family. Fe(2+) serves as cofactor.

It catalyses the reaction N-terminal N-formyl-L-methionyl-[peptide] + H2O = N-terminal L-methionyl-[peptide] + formate. Its function is as follows. Removes the formyl group from the N-terminal Met of newly synthesized proteins. Requires at least a dipeptide for an efficient rate of reaction. N-terminal L-methionine is a prerequisite for activity but the enzyme has broad specificity at other positions. This Pelotomaculum thermopropionicum (strain DSM 13744 / JCM 10971 / SI) protein is Peptide deformylase.